A 529-amino-acid polypeptide reads, in one-letter code: Bifunctional purine biosynthesis protein PurH (529 aa).

The 148-residue stretch at 1 to 148 folds into the MGS-like domain; it reads MQQRRPVRRA…KNHKDVAIVV (148 aa). Lysine 287 is modified (N6-acetyllysine).

Belongs to the PurH family.

It catalyses the reaction (6R)-10-formyltetrahydrofolate + 5-amino-1-(5-phospho-beta-D-ribosyl)imidazole-4-carboxamide = 5-formamido-1-(5-phospho-D-ribosyl)imidazole-4-carboxamide + (6S)-5,6,7,8-tetrahydrofolate. The enzyme catalyses IMP + H2O = 5-formamido-1-(5-phospho-D-ribosyl)imidazole-4-carboxamide. It participates in purine metabolism; IMP biosynthesis via de novo pathway; 5-formamido-1-(5-phospho-D-ribosyl)imidazole-4-carboxamide from 5-amino-1-(5-phospho-D-ribosyl)imidazole-4-carboxamide (10-formyl THF route): step 1/1. The protein operates within purine metabolism; IMP biosynthesis via de novo pathway; IMP from 5-formamido-1-(5-phospho-D-ribosyl)imidazole-4-carboxamide: step 1/1. In Escherichia coli O157:H7, this protein is Bifunctional purine biosynthesis protein PurH.